The following is a 730-amino-acid chain: Nitrogen regulatory protein GLN3 (730 aa).

Residues 1–45 (MQDDPENSKLYDLLNSHLDVHGRSNEEPRQTGDSRSQSSGNTGEN) are disordered. Over residues 18–32 (LDVHGRSNEEPRQTG) the composition is skewed to basic and acidic residues. Over residues 33-43 (DSRSQSSGNTG) the composition is skewed to polar residues. The 9aaTAD motif lies at 129-137 (GEIAQLWDF). 2 disordered regions span residues 187 to 208 (SSTSNSNINQPSINNNSNTNAQ) and 224 to 262 (SSSAMNITNNNNSNNSNIQHPFLKKSDSIGLSSSNTTNS). Residues 224-240 (SSSAMNITNNNNSNNSN) are compositionally biased toward low complexity. Phosphoserine is present on Ser251. Residues 252 to 262 (IGLSSSNTTNS) show a composition bias toward polar residues. Ser267 and Ser285 each carry phosphoserine. The segment at 306–330 (CFNCKTFKTPLWRRSPEGNTLCNAC) adopts a GATA-type zinc-finger fold. 2 disordered regions span residues 355 to 398 (SKKR…SLQQ) and 449 to 516 (ANFN…NSQQ). Composition is skewed to low complexity over residues 370 to 384 (TPSAPATASTSVTTT), 449 to 470 (ANFNGASNANLNSNNLMRHNSN), and 482 to 499 (RSSTSSNTSSSSKSSSRS). Ser469 is modified (phosphoserine). Ser552 and Ser562 each carry phosphoserine. Disordered regions lie at residues 593 to 673 (LHEQ…SNSF) and 696 to 717 (DVSAGGKISEDNSTKGSSKESS). Low complexity-rich tracts occupy residues 596 to 631 (QQQVDVNSNTNTNSNRQNWNSSNSVSTNSRSSNFVS), 641 to 651 (TPVDSPSVSRP), and 658 to 672 (TSLLSQQLQNSESNS).

It is found in the nucleus. In terms of biological role, positive nitrogen regulatory protein. Required for the activation of transcription of a number of genes (including the allantoin pathway genes) in response to the replacement of glutamine by glutamate as source of nitrogen. Binds the nitrogen upstream activation sequence of GLN1, the gene encoding glutamine synthetase. URE2 may catalytically inactivate GLN3 in response to an increase in the intracellular concentration of glutamine. This chain is Nitrogen regulatory protein GLN3 (GLN3), found in Saccharomyces cerevisiae (strain ATCC 204508 / S288c) (Baker's yeast).